A 192-amino-acid chain; its full sequence is Inosine triphosphate pyrophosphatase (192 aa).

8–13 contacts ITP; it reads TTNLKK. Glutamate 34 contacts Mg(2+). ITP contacts are provided by residues lysine 46, 64–65, lysine 81, 141–144, lysine 164, and 169–170; these read DT, EGFD, and HR.

It belongs to the HAM1 NTPase family. As to quaternary structure, homodimer. Requires Mg(2+) as cofactor. The cofactor is Mn(2+).

The protein resides in the cytoplasm. It is found in the nucleus. It carries out the reaction ITP + H2O = IMP + diphosphate + H(+). The enzyme catalyses dITP + H2O = dIMP + diphosphate + H(+). It catalyses the reaction XTP + H2O = XMP + diphosphate + H(+). In terms of biological role, pyrophosphatase that hydrolyzes non-canonical purine nucleotides such as inosine triphosphate (ITP), deoxyinosine triphosphate (dITP) or xanthosine 5'-triphosphate (XTP) to their respective monophosphate derivatives. The enzyme does not distinguish between the deoxy- and ribose forms. Probably excludes non-canonical purines from RNA and DNA precursor pools, thus preventing their incorporation into RNA and DNA and avoiding chromosomal lesions. This Encephalitozoon cuniculi (strain GB-M1) (Microsporidian parasite) protein is Inosine triphosphate pyrophosphatase.